The primary structure comprises 67 residues: Myrmicitoxin(1)-Pm6a (67 aa).

The first 25 residues, 1–25 (MRSLYLSFSLTIIFVLVIMHAEAKA), serve as a signal peptide directing secretion. Residues 26–37 (ISEPNAIAEADP) constitute a propeptide that is removed on maturation. The residue at position 66 (Val66) is a Valine amide.

This sequence belongs to the formicidae venom clade 3 family. As to expression, expressed by the venom gland.

Its subcellular location is the secreted. Its function is as follows. Toxin that causes a rapid and irreversible paralysis when intrathoracically injected into insects (blowflies). Does not cause spontaneous nocifensive behaviors by intraplantar injection in mice. Exhibits hemolytic and cytotoxic activities on HEK293 cells. The chain is Myrmicitoxin(1)-Pm6a from Pogonomyrmex maricopa (Maricopa harvester ant).